Reading from the N-terminus, the 947-residue chain is Bifunctional glutamine synthetase adenylyltransferase/adenylyl-removing enzyme (947 aa).

The segment at 1–440 is adenylyl removase; it reads MTPLSSPLSQ…VFNELIGDDE (440 aa). Positions 450–947 are adenylyl transferase; the sequence is SEPWREVWQD…ASWRKWLVAV (498 aa).

The protein belongs to the GlnE family. Mg(2+) serves as cofactor.

The enzyme catalyses [glutamine synthetase]-O(4)-(5'-adenylyl)-L-tyrosine + phosphate = [glutamine synthetase]-L-tyrosine + ADP. It catalyses the reaction [glutamine synthetase]-L-tyrosine + ATP = [glutamine synthetase]-O(4)-(5'-adenylyl)-L-tyrosine + diphosphate. In terms of biological role, involved in the regulation of glutamine synthetase GlnA, a key enzyme in the process to assimilate ammonia. When cellular nitrogen levels are high, the C-terminal adenylyl transferase (AT) inactivates GlnA by covalent transfer of an adenylyl group from ATP to specific tyrosine residue of GlnA, thus reducing its activity. Conversely, when nitrogen levels are low, the N-terminal adenylyl removase (AR) activates GlnA by removing the adenylyl group by phosphorolysis, increasing its activity. The regulatory region of GlnE binds the signal transduction protein PII (GlnB) which indicates the nitrogen status of the cell. In Salmonella newport (strain SL254), this protein is Bifunctional glutamine synthetase adenylyltransferase/adenylyl-removing enzyme.